Reading from the N-terminus, the 1167-residue chain is Topoisomerase 1-associated factor 1 (1167 aa).

Disordered regions lie at residues 332-353, 563-594, 889-969, 981-1093, and 1105-1167; these read SKRW…NNDF, SRRR…DYAE, KYSH…LENT, YVHA…DAID, and FDDD…SDSE. Residues 572 to 582 are compositionally biased toward basic and acidic residues; the sequence is REEQLVNKGSD. Composition is skewed to acidic residues over residues 583 to 593 and 949 to 958; these read EEQESEDEDYA and EEEPVDEETL. Composition is skewed to basic and acidic residues over residues 959 to 969 and 996 to 1013; these read EERRQARLENT and EFFR…ERIK. Over residues 1062–1074 the composition is skewed to acidic residues; it reads ELEEDDILMDDME. The span at 1078–1088 shows a compositional bias: polar residues; sequence RASSGEYSSND. The span at 1110–1127 shows a compositional bias: basic and acidic residues; sequence AFGRDRDKDETSVDRDGA.

This sequence belongs to the timeless family.

The protein resides in the nucleus. Functionally, involved in chromosome segregation during meiosis and DNA damage repair. This is Topoisomerase 1-associated factor 1 (tof1) from Emericella nidulans (strain FGSC A4 / ATCC 38163 / CBS 112.46 / NRRL 194 / M139) (Aspergillus nidulans).